A 410-amino-acid polypeptide reads, in one-letter code: UBX domain-containing protein 3 (410 aa).

Disordered regions lie at residues 46 to 139 (EEDH…PDPK) and 154 to 212 (TISP…EKPL). Over residues 65–85 (GSSSGISGGDQQPPRPLQRQQ) the composition is skewed to low complexity. A compositionally biased stretch (polar residues) spans 86-97 (NTQGQGMKSGTA). 3 positions are modified to phosphoserine: serine 156, serine 167, and serine 186. Residues 163–174 (SGPSSLASSWAS) are compositionally biased toward low complexity. The span at 183–196 (NEASGSTTPVTQSG) shows a compositional bias: polar residues. A Phosphothreonine modification is found at threonine 190. An SEP domain is found at 211–276 (PLRRTLYFWR…VQHRMDEDYV (66 aa)). The 77-residue stretch at 334 to 410 (ENKPTTRIQV…KNASLVQKSL (77 aa)) folds into the UBX domain.

Interacts with cdc48.

Functionally, involved in CDC48-dependent protein degradation through the ubiquitin/proteasome pathway. Involved in delivery of substrates to the 26S proteasome. Also required for membrane fusion and sporulation. The sequence is that of UBX domain-containing protein 3 (ubx3) from Schizosaccharomyces pombe (strain 972 / ATCC 24843) (Fission yeast).